The following is a 1759-amino-acid chain: Protein TIC 214 (1759 aa).

Helical transmembrane passes span 23 to 45 (VVVG…LFLL), 64 to 84 (FITG…HLAL), 129 to 149 (IFFQ…SSIF), 172 to 192 (IGWI…LICI), and 221 to 241 (IFVV…PPPF).

Belongs to the TIC214 family. In terms of assembly, part of the Tic complex.

The protein localises to the plastid. The protein resides in the chloroplast inner membrane. Its function is as follows. Involved in protein precursor import into chloroplasts. May be part of an intermediate translocation complex acting as a protein-conducting channel at the inner envelope. This is Protein TIC 214 from Phaseolus vulgaris (Kidney bean).